The chain runs to 249 residues: 1-(5-phosphoribosyl)-5-[(5-phosphoribosylamino)methylideneamino] imidazole-4-carboxamide isomerase (249 aa).

Aspartate 8 serves as the catalytic Proton acceptor. Aspartate 131 functions as the Proton donor in the catalytic mechanism.

It belongs to the HisA/HisF family.

It is found in the cytoplasm. It catalyses the reaction 1-(5-phospho-beta-D-ribosyl)-5-[(5-phospho-beta-D-ribosylamino)methylideneamino]imidazole-4-carboxamide = 5-[(5-phospho-1-deoxy-D-ribulos-1-ylimino)methylamino]-1-(5-phospho-beta-D-ribosyl)imidazole-4-carboxamide. Its pathway is amino-acid biosynthesis; L-histidine biosynthesis; L-histidine from 5-phospho-alpha-D-ribose 1-diphosphate: step 4/9. The chain is 1-(5-phosphoribosyl)-5-[(5-phosphoribosylamino)methylideneamino] imidazole-4-carboxamide isomerase from Nitrosomonas europaea (strain ATCC 19718 / CIP 103999 / KCTC 2705 / NBRC 14298).